The following is a 114-amino-acid chain: Large ribosomal subunit protein uL18 (114 aa).

Belongs to the universal ribosomal protein uL18 family. As to quaternary structure, part of the 50S ribosomal subunit; part of the 5S rRNA/L5/L18/L25 subcomplex. Contacts the 5S and 23S rRNAs.

Functionally, this is one of the proteins that bind and probably mediate the attachment of the 5S RNA into the large ribosomal subunit, where it forms part of the central protuberance. The chain is Large ribosomal subunit protein uL18 from Porphyromonas gingivalis (strain ATCC 33277 / DSM 20709 / CIP 103683 / JCM 12257 / NCTC 11834 / 2561).